Here is a 374-residue protein sequence, read N- to C-terminus: Serine/threonine-protein kinase-transforming protein mos (374 aa).

The region spanning 94 to 370 is the Protein kinase domain; sequence VCLMHRLGSG…LLQRDLKAFR (277 aa). ATP is bound by residues 100–108 and K121; that span reads LGSGGFGSV. D229 serves as the catalytic Proton acceptor.

It belongs to the protein kinase superfamily. Ser/Thr protein kinase family.

It catalyses the reaction L-seryl-[protein] + ATP = O-phospho-L-seryl-[protein] + ADP + H(+). The enzyme catalyses L-threonyl-[protein] + ATP = O-phospho-L-threonyl-[protein] + ADP + H(+). The protein is Serine/threonine-protein kinase-transforming protein mos (V-MOS) of Mus musculus (Mouse).